The sequence spans 192 residues: Inosine triphosphate pyrophosphatase (192 aa).

10–15 lines the ITP pocket; the sequence is TGNANK. Mg(2+) is bound at residue Glu-43. ITP is bound by residues Lys-56, 74 to 75, Lys-91, 149 to 152, Lys-173, and 178 to 179; these read DT, FGWD, and HR.

Belongs to the HAM1 NTPase family. In terms of assembly, homodimer. Mg(2+) is required as a cofactor. Requires Mn(2+) as cofactor.

The protein localises to the cytoplasm. It is found in the nucleus. It catalyses the reaction ITP + H2O = IMP + diphosphate + H(+). The catalysed reaction is dITP + H2O = dIMP + diphosphate + H(+). It carries out the reaction XTP + H2O = XMP + diphosphate + H(+). Its function is as follows. Pyrophosphatase that hydrolyzes non-canonical purine nucleotides such as inosine triphosphate (ITP), deoxyinosine triphosphate (dITP) or xanthosine 5'-triphosphate (XTP) to their respective monophosphate derivatives. The enzyme does not distinguish between the deoxy- and ribose forms. Probably excludes non-canonical purines from RNA and DNA precursor pools, thus preventing their incorporation into RNA and DNA and avoiding chromosomal lesions. In Candida glabrata (strain ATCC 2001 / BCRC 20586 / JCM 3761 / NBRC 0622 / NRRL Y-65 / CBS 138) (Yeast), this protein is Inosine triphosphate pyrophosphatase.